Reading from the N-terminus, the 497-residue chain is Glutamyl-tRNA reductase (497 aa).

Substrate-binding positions include 58–61 (TCNR), serine 118, 123–125 (EQQ), and glutamine 129. Cysteine 59 acts as the Nucleophile in catalysis. Position 214-219 (214-219 (GAGAMA)) interacts with NADP(+). Polar residues predominate over residues 461-477 (VTQPGQADSSAAQTAGT). Positions 461–486 (VTQPGQADSSAAQTAGTSARADQIPS) are disordered.

It belongs to the glutamyl-tRNA reductase family. Homodimer.

It catalyses the reaction (S)-4-amino-5-oxopentanoate + tRNA(Glu) + NADP(+) = L-glutamyl-tRNA(Glu) + NADPH + H(+). The protein operates within porphyrin-containing compound metabolism; protoporphyrin-IX biosynthesis; 5-aminolevulinate from L-glutamyl-tRNA(Glu): step 1/2. In terms of biological role, catalyzes the NADPH-dependent reduction of glutamyl-tRNA(Glu) to glutamate 1-semialdehyde (GSA). The polypeptide is Glutamyl-tRNA reductase (Corynebacterium jeikeium (strain K411)).